Consider the following 71-residue polypeptide: Small ribosomal subunit protein bS21 (71 aa).

Belongs to the bacterial ribosomal protein bS21 family.

The protein is Small ribosomal subunit protein bS21 of Buchnera aphidicola subsp. Acyrthosiphon pisum (strain 5A).